The primary structure comprises 380 residues: tRNA-specific 2-thiouridylase MnmA (380 aa).

Residues 25 to 32 (AMSGGVDS) and methionine 51 contribute to the ATP site. The Nucleophile role is filled by cysteine 119. Cysteine 119 and cysteine 216 are oxidised to a cystine. Glycine 143 provides a ligand contact to ATP. The interval 166–168 (KDQ) is interaction with tRNA. The Cysteine persulfide intermediate role is filled by cysteine 216. The tract at residues 320-321 (RY) is interaction with tRNA.

Belongs to the MnmA/TRMU family.

Its subcellular location is the cytoplasm. It catalyses the reaction S-sulfanyl-L-cysteinyl-[protein] + uridine(34) in tRNA + AH2 + ATP = 2-thiouridine(34) in tRNA + L-cysteinyl-[protein] + A + AMP + diphosphate + H(+). Its function is as follows. Catalyzes the 2-thiolation of uridine at the wobble position (U34) of tRNA, leading to the formation of s(2)U34. This Deinococcus radiodurans (strain ATCC 13939 / DSM 20539 / JCM 16871 / CCUG 27074 / LMG 4051 / NBRC 15346 / NCIMB 9279 / VKM B-1422 / R1) protein is tRNA-specific 2-thiouridylase MnmA.